The primary structure comprises 191 residues: Calcium and integrin-binding protein 1 (191 aa).

Residue G2 is the site of N-myristoyl glycine attachment. EF-hand domains lie at 103–138 (TPDI…LTGE) and 148–183 (EMKQ…SPDF). Positions 116, 118, 120, 122, 127, 161, 163, 165, 167, and 172 each coordinate Ca(2+). D118 carries the phosphoserine modification.

Monomer. Interacts with MYO1C. Interacts (via C-terminal region) with PPP3R1 and CACNA1C; the interactions increase upon cardiomyocytes hypertrophy. Interacts with the heterodimeric integrin alpha-IIb/beta3 (ITGA2B-ITGB3). Interacts with ITGA2B (via cytoplasmic domain); the interaction is direct and calcium-dependent. Interacts with the protein kinases PLK2/SNK and PRKDC (via the region immediately upstream of the kinase domain). Interacts with PLK3; the interaction inhibits PLK3 kinase activity. Interacts with PSEN2. Interacts (via C-terminus) with F8. Interacts with NBR1 (via C-terminus). Interacts with FEZ1 (via C-terminus). Interacts with UBR5 (via C-terminus); the interaction is sensitive to DNA damage, and may target CIB1 for ubiquitin-mediated degradation. Interacts with IFI6; the interaction is direct. Interacts with BCL2. Interacts with ITPR3; the interaction occurs in a calcium-dependent manner. Interacts with PTK2/FAK1. Interacts with MAP3K5; the interaction inhibits MAP3K5 activation by phosphorylation, and its subsequent interaction with TRAF2. Isoform 2 interacts with PRKD2 (via N-terminal AP-rich region), PTK2/FAK1 and PAK1. Interacts with TAS1R2 (via C-terminus); the interaction is independent of the myristoylation state of CIB1. Interacts (via C-terminal region) with STMN2 (via the N-terminal region); the interaction is direct, occurs in a calcium-dependent manner and attenuates the STMN2-induced neurite outgrowth inhibition. Interacts with SPHK1, the interaction occurs in a calcium-dependent manner. Interacts with ITGA2B (via C-terminal cytoplasmic tail); the interaction occurs upon platelet aggregation and is stabilized/increased in a calcium and magnesium-dependent manner. Interacts with PAK1 (via N-terminal region); the interaction is direct and occurs in a calcium-dependent manner. Interacts with RAC3 (via C-terminal region); the interaction induces their association with the cytoskeleton upon alpha-IIb/beta3 integrin-mediated adhesion. Interacts with ITGA5 and ITGAV. Interacts and forms a complex with TMC6 and TMC8; the interaction stabilizes each component of the complex. As to quaternary structure, (Microbial infection) Interacts with human papillomavirus 4/HPV4 protein E8, human papillomavirus 5/HPV5 protein E1, and human papillomavirus 16/HPV16 proteins E2 and E5. Post-translationally, phosphorylation of isoform 2 at Ser-118 by PRKD2 increases its ability to stimulate tumor angiogenesis. As to expression, ubiquitously expressed. Expressed in the epidermis, hair follicles and keratinocytes. Detected in platelets and in cell lines of megakaryocytic and erythrocytic lineages. Both isoform 1 and isoform 2 are detected in various cancer cell lines, with isoform 2 being the predominant form (at protein level).

It localises to the membrane. The protein resides in the cell membrane. It is found in the sarcolemma. The protein localises to the apical cell membrane. Its subcellular location is the cell projection. It localises to the ruffle membrane. The protein resides in the filopodium tip. It is found in the growth cone. The protein localises to the lamellipodium. Its subcellular location is the cytoplasm. It localises to the cytoskeleton. The protein resides in the microtubule organizing center. It is found in the centrosome. The protein localises to the perinuclear region. Its subcellular location is the nucleus. It localises to the neuron projection. The protein resides in the perikaryon. It is found in the golgi apparatus. The protein localises to the trans-Golgi network. Functionally, calcium-binding protein that plays a role in the regulation of numerous cellular processes, such as cell differentiation, cell division, cell proliferation, cell migration, thrombosis, angiogenesis, cardiac hypertrophy and apoptosis. Involved in bone marrow megakaryocyte differentiation by negatively regulating thrombopoietin-mediated signaling pathway. Participates in the endomitotic cell cycle of megakaryocyte, a form of mitosis in which both karyokinesis and cytokinesis are interrupted. Plays a role in integrin signaling by negatively regulating alpha-IIb/beta3 activation in thrombin-stimulated megakaryocytes preventing platelet aggregation. Up-regulates PTK2/FAK1 activity, and is also needed for the recruitment of PTK2/FAK1 to focal adhesions; it thus appears to play an important role in focal adhesion formation. Positively regulates cell migration on fibronectin in a CDC42-dependent manner, the effect being negatively regulated by PAK1. Functions as a negative regulator of stress activated MAP kinase (MAPK) signaling pathways. Down-regulates inositol 1,4,5-trisphosphate receptor-dependent calcium signaling. Involved in sphingosine kinase SPHK1 translocation to the plasma membrane in a N-myristoylation-dependent manner preventing TNF-alpha-induced apoptosis. Regulates serine/threonine-protein kinase PLK3 activity for proper completion of cell division progression. Plays a role in microtubule (MT) dynamics during neuronal development; disrupts the MT depolymerization activity of STMN2 attenuating NGF-induced neurite outgrowth and the MT reorganization at the edge of lamellipodia. Promotes cardiomyocyte hypertrophy via activation of the calcineurin/NFAT signaling pathway. Stimulates calcineurin PPP3R1 activity by mediating its anchoring to the sarcolemma. In ischemia-induced (pathological or adaptive) angiogenesis, stimulates endothelial cell proliferation, migration and microvessel formation by activating the PAK1 and ERK1/ERK2 signaling pathway. Also promotes cancer cell survival and proliferation. May regulate cell cycle and differentiation of spermatogenic germ cells, and/or differentiation of supporting Sertoli cells. Forms a complex with TMC6/EVER1 and TMC8/EVER2 in lymphocytes and keratynocytes where CIB1 stabilizes TMC6 and TMC8 levels and reciprocally. In terms of biological role, acts as a restriction factor that promotes keratinocyte-intrinsic immunity to human beta-papillomaviruses (HPVs). Plays a regulatory role in angiogenesis and tumor growth by mediating PKD/PRKD2-induced vascular endothelial growth factor A (VEGFA) secretion. The sequence is that of Calcium and integrin-binding protein 1 (CIB1) from Homo sapiens (Human).